Here is a 477-residue protein sequence, read N- to C-terminus: Shikimate biosynthesis protein AroDE (477 aa).

Residues 1-209 form a 3-dehydroquinate dehydratase region; the sequence is MLCATVSGPS…LEELLSYNYS (209 aa). Residues S21, 29–31, and 56–58 contribute to the 3-dehydroquinate site; these read ELR and TFR. The active-site Proton donor/acceptor; for 3-dehydroquinate dehydratase activity is the H111. K134 (schiff-base intermediate with substrate; for 3-dehydroquinate dehydratase activity) is an active-site residue. The 3-dehydroquinate site is built by R172 and Q197. Residues 210–477 are shikimate 5-dehydrogenase; that stretch reads KLSEKSHIYG…NYVKNFMAKV (268 aa). A shikimate-binding site is contributed by 228–230; that stretch reads SIS. K279 (proton acceptor; for shikimate dehydrogenase activity) is an active-site residue. Shikimate-binding residues include N300 and D315. NADP(+) contacts are provided by residues 339–343, 362–364, and G438; these read GAGGA and NRT. Shikimate is bound at residue Q445.

It in the N-terminal section; belongs to the type-I 3-dehydroquinase family. In the C-terminal section; belongs to the shikimate dehydrogenase family.

The catalysed reaction is 3-dehydroquinate = 3-dehydroshikimate + H2O. It catalyses the reaction shikimate + NADP(+) = 3-dehydroshikimate + NADPH + H(+). It functions in the pathway metabolic intermediate biosynthesis; chorismate biosynthesis; chorismate from D-erythrose 4-phosphate and phosphoenolpyruvate: step 3/7. It participates in metabolic intermediate biosynthesis; chorismate biosynthesis; chorismate from D-erythrose 4-phosphate and phosphoenolpyruvate: step 4/7. Its function is as follows. Bifunctional enzyme that catalyzes two sequential steps of the aromatic amino acids biosynthetic pathway. In the first reaction, the AroD domain catalyzes the cis-dehydration of 3-dehydroquinate (DHQ) and introduces the first double bond of the aromatic ring to yield 3-dehydroshikimate; in the second reaction, the AroE domain catalyzes the reversible NADPH linked reduction of 3-dehydroshikimate (DHSA) to yield shikimate (SA). The sequence is that of Shikimate biosynthesis protein AroDE from Chlamydia pneumoniae (Chlamydophila pneumoniae).